Consider the following 274-residue polypeptide: MSIAITSPCQIFPAIINADVYEKNLKVDDNAINVSKYSDNSVSLPTLSYEDFHHFSVVRHWNILFPYRLATEWNWESRRLRKRDALVILELVALSDETNKRGSVSRIMNTVRSKVHLMFSSSTELPSFQEIENWKKSPGLLAASKYGCALFIQFLKQQTSENEVDFWLDCQKFRSSTAKISWKNKEVHRILDQFLSSSAPRKIDMETSILARCMEYVEHIEGWKYTFDVAQAYVGLKFPKESHKKFLEDPLYLDLLELVISGRSCNKVGHKKSC.

An RGS domain is found at 137-256; the sequence is SPGLLAASKY…LEDPLYLDLL (120 aa).

The sequence is that of Regulator of G-protein signaling rgs-11 (rgs-11) from Caenorhabditis elegans.